The chain runs to 396 residues: Elongation factor Tu (396 aa).

The tr-type G domain maps to 10-206 (KPHVNVGTIG…ALDTYIPTPE (197 aa)). A G1 region spans residues 19-26 (GHVDHGKT). 19-26 (GHVDHGKT) is a binding site for GTP. A Mg(2+)-binding site is contributed by threonine 26. The G2 stretch occupies residues 60–64 (GITIN). The segment at 81–84 (DCPG) is G3. GTP-binding positions include 81–85 (DCPGH) and 136–139 (NKAD). Residues 136-139 (NKAD) form a G4 region. Positions 174–176 (SAK) are G5.

The protein belongs to the TRAFAC class translation factor GTPase superfamily. Classic translation factor GTPase family. EF-Tu/EF-1A subfamily. As to quaternary structure, monomer.

It localises to the cytoplasm. It catalyses the reaction GTP + H2O = GDP + phosphate + H(+). Its function is as follows. GTP hydrolase that promotes the GTP-dependent binding of aminoacyl-tRNA to the A-site of ribosomes during protein biosynthesis. The protein is Elongation factor Tu of Janthinobacterium sp. (strain Marseille) (Minibacterium massiliensis).